Consider the following 663-residue polypeptide: UvrABC system protein B (663 aa).

The region spanning 31 to 418 (DNIEGGEKAQ…TDTVVEQIIR (388 aa)) is the Helicase ATP-binding domain. 44–51 (GATGTGKT) contacts ATP. Positions 97-120 (YYDYYQPEAYVPSSDTYIEKDSSV) match the Beta-hairpin motif. One can recognise a Helicase C-terminal domain in the interval 435–601 (QMDDLLGEIN…TIKKEIRDLI (167 aa)). The region spanning 627–662 (QAEIKALQQQMQEAAELLDFELAAQIRDVILELKAI) is the UVR domain.

It belongs to the UvrB family. Forms a heterotetramer with UvrA during the search for lesions. Interacts with UvrC in an incision complex.

The protein localises to the cytoplasm. Its function is as follows. The UvrABC repair system catalyzes the recognition and processing of DNA lesions. A damage recognition complex composed of 2 UvrA and 2 UvrB subunits scans DNA for abnormalities. Upon binding of the UvrA(2)B(2) complex to a putative damaged site, the DNA wraps around one UvrB monomer. DNA wrap is dependent on ATP binding by UvrB and probably causes local melting of the DNA helix, facilitating insertion of UvrB beta-hairpin between the DNA strands. Then UvrB probes one DNA strand for the presence of a lesion. If a lesion is found the UvrA subunits dissociate and the UvrB-DNA preincision complex is formed. This complex is subsequently bound by UvrC and the second UvrB is released. If no lesion is found, the DNA wraps around the other UvrB subunit that will check the other stand for damage. The chain is UvrABC system protein B from Streptococcus agalactiae serotype III (strain NEM316).